The sequence spans 345 residues: tRNA pseudouridine synthase B (345 aa).

Asp-39 acts as the Nucleophile in catalysis.

This sequence belongs to the pseudouridine synthase TruB family. Type 1 subfamily.

The enzyme catalyses uridine(55) in tRNA = pseudouridine(55) in tRNA. Responsible for synthesis of pseudouridine from uracil-55 in the psi GC loop of transfer RNAs. The sequence is that of tRNA pseudouridine synthase B from Rickettsia peacockii (strain Rustic).